The chain runs to 327 residues: Thioredoxin reductase sirT (327 aa).

Residues 15–18 (AGPA), 37–42 (DTGVFR), His-50, and Ala-115 contribute to the FAD site. The cysteines at positions 139 and 142 are disulfide-linked. FAD-binding positions include Asp-289 and 296–297 (QV).

Belongs to the class-II pyridine nucleotide-disulfide oxidoreductase family. Homodimer. Requires FAD as cofactor.

Its pathway is mycotoxin biosynthesis. Thioredoxin reductase; part of the gene cluster that mediates the biosynthesis of sirodesmin PL, an epipolythiodioxopiperazine (ETP) characterized by a disulfide bridged cyclic dipeptide and that acts as a phytotoxin which is involved in the blackleg didease of canola. SirD catalyzes the O-prenylation of L-tyrosine (L-Tyr) in the presence of dimethylallyl diphosphate (DMAPP) to yield 4-O-dimethylallyl-L-Tyr, and therefore represents probably the first pathway-specific enzyme in the biosynthesis of sirodesmin PL. 4-O-dimethylallyl-L-Tyr, then undergoes condensation with L-Ser in a reaction catalyzed by the non-ribosomal peptide synthase sirP to form the diketopiperazine (DKP) backbone. Further bishydroxylation of the DKP performed by the cytochrome P450 monooxygenase sirC leads to the production of the intermediate phomamide. This step is essential to form the reactive thiol group required for toxicity of sirodesmin PL. The next steps of sirodesmin biosynthesis are not well understood yet, but some predictions could be made from intermediate compounds identification. Phomamide is converted into phomalizarine via oxidation, probably by sirT. Further oxidation, methylation (by sirM or sirN) and reduction steps convert phomalizarine to deacetyl sirodesmin. Finally, acetyltransferase sirH probably acetylates deacetyl sirodesmin to produce sirodesmin PL. The protein is Thioredoxin reductase sirT of Leptosphaeria maculans (Blackleg fungus).